A 371-amino-acid polypeptide reads, in one-letter code: tRNA-specific 2-thiouridylase MnmA (371 aa).

Residues 11–18 and M37 contribute to the ATP site; that span reads GMSGGVDS. Residues 97–99 form an interaction with target base in tRNA region; the sequence is NPD. Residue C102 is the Nucleophile of the active site. A disulfide bridge links C102 with C199. Residue G127 participates in ATP binding. An interaction with tRNA region spans residues 149–151; sequence KDQ. C199 (cysteine persulfide intermediate) is an active-site residue. The interaction with tRNA stretch occupies residues 311–312; the sequence is RY.

This sequence belongs to the MnmA/TRMU family.

It is found in the cytoplasm. It catalyses the reaction S-sulfanyl-L-cysteinyl-[protein] + uridine(34) in tRNA + AH2 + ATP = 2-thiouridine(34) in tRNA + L-cysteinyl-[protein] + A + AMP + diphosphate + H(+). In terms of biological role, catalyzes the 2-thiolation of uridine at the wobble position (U34) of tRNA, leading to the formation of s(2)U34. The protein is tRNA-specific 2-thiouridylase MnmA of Idiomarina loihiensis (strain ATCC BAA-735 / DSM 15497 / L2-TR).